Consider the following 564-residue polypeptide: Arginine--tRNA ligase (564 aa).

Residues 136–146 (ANPTGPLHMGN) carry the 'HIGH' region motif.

The protein belongs to the class-I aminoacyl-tRNA synthetase family. Monomer.

It is found in the cytoplasm. It catalyses the reaction tRNA(Arg) + L-arginine + ATP = L-arginyl-tRNA(Arg) + AMP + diphosphate. The protein is Arginine--tRNA ligase of Acetivibrio thermocellus (strain ATCC 27405 / DSM 1237 / JCM 9322 / NBRC 103400 / NCIMB 10682 / NRRL B-4536 / VPI 7372) (Clostridium thermocellum).